We begin with the raw amino-acid sequence, 450 residues long: Neutral protease 2 homolog AFUB_070680 (450 aa).

The N-terminal stretch at Met-1–Ala-19 is a signal peptide. The propeptide occupies Leu-20–Arg-172. 2 disulfide bridges follow: Cys-179–Cys-251 and Cys-258–Cys-276. Position 300 (His-300) interacts with Zn(2+). Glu-301 is a catalytic residue. Residues His-304 and Asp-315 each coordinate Zn(2+). Over residues Gln-364–Met-392 the composition is skewed to polar residues. Residues Gln-364–Pro-416 form a disordered region. The span at Gln-398–Thr-409 shows a compositional bias: low complexity.

Belongs to the peptidase M35 family. Zn(2+) serves as cofactor.

Its subcellular location is the secreted. It catalyses the reaction Preferential cleavage of bonds with hydrophobic residues in P1'. Also 3-Asn-|-Gln-4 and 8-Gly-|-Ser-9 bonds in insulin B chain.. Functionally, secreted metalloproteinase that allows assimilation of proteinaceous substrates. Shows high activities on basic nuclear substrates such as histone and protamine. May be involved in virulence. The sequence is that of Neutral protease 2 homolog AFUB_070680 from Aspergillus fumigatus (strain ATCC MYA-4609 / CBS 101355 / FGSC A1100 / Af293) (Neosartorya fumigata).